A 160-amino-acid polypeptide reads, in one-letter code: Anaerobic nitrite reductase HBII (160 aa).

The region spanning 8 to 157 (GFTEEQEALV…LVAAIKLEMK (150 aa)) is the Globin domain. The short motif at 41–45 (EIAPS) is the Homodimerization element. 6 residues coordinate heme b: Ser51, Lys65, His69, Lys99, Ser103, and His104. Positions 111–123 (DEHFEVTKFALLE) match the Homodimerization motif.

The protein belongs to the plant globin family. In terms of assembly, homodimer. Heme b is required as a cofactor.

The protein resides in the cytoplasm. The protein localises to the nucleus. It catalyses the reaction Fe(III)-heme b-[protein] + nitric oxide + H2O = Fe(II)-heme b-[protein] + nitrite + 2 H(+). In terms of biological role, phytoglobin that reduces nitrite to nitric oxide (NO) under anoxic conditions (e.g. during flooding or in waterlogged soil) and upon root nodulation. Required for general plant development and during nodulation, especially for the onset of symbiosis. Monitors nitric oxide (NO) levels during early phase of the nitrogen-fixing symbiosis and buffers oxygen in functioning nodules. May not function as an oxygen storage or transport protein. Has an unusually high affinity for O(2) through a hexacoordinate heme iron because of a very low dissociation constant. The polypeptide is Anaerobic nitrite reductase HBII (Casuarina glauca (Swamp oak)).